The chain runs to 406 residues: ATP-dependent RNA helicase eIF4A (406 aa).

A Q motif motif is present at residues 25–53 (DSFDAMDLKPELLRGVYAYGFERPSAIQQ). Positions 56-226 (ILPIIKGNDV…TKFMRDPVRI (171 aa)) constitute a Helicase ATP-binding domain. ATP is bound at residue 69-76 (AQSGTGKT). The DEAD box motif lies at 174 to 177 (DEAD). A Helicase C-terminal domain is found at 237-398 (GIKQFYIAVE…EMPMNVAGKF (162 aa)).

This sequence belongs to the DEAD box helicase family. eIF4A subfamily. Component of the eIF4F complex, which composition varies with external and internal environmental conditions. It is composed of at least eIF4A, eIF4E and eIF4G.

It is found in the cytoplasm. It carries out the reaction ATP + H2O = ADP + phosphate + H(+). Functionally, ATP-dependent RNA helicase which is a subunit of the eIF4F complex involved in cap recognition and is required for mRNA binding to ribosome. In the current model of translation initiation, eIF4A unwinds RNA secondary structures in the 5'-UTR of mRNAs which is necessary to allow efficient binding of the small ribosomal subunit, and subsequent scanning for the initiator codon. This chain is ATP-dependent RNA helicase eIF4A (tif1), found in Aspergillus fumigatus (strain ATCC MYA-4609 / CBS 101355 / FGSC A1100 / Af293) (Neosartorya fumigata).